The primary structure comprises 334 residues: 6-phosphogluconolactonase (334 aa).

Belongs to the cycloisomerase 2 family.

It carries out the reaction 6-phospho-D-glucono-1,5-lactone + H2O = 6-phospho-D-gluconate + H(+). Its pathway is carbohydrate degradation; pentose phosphate pathway; D-ribulose 5-phosphate from D-glucose 6-phosphate (oxidative stage): step 2/3. Catalyzes the hydrolysis of 6-phosphogluconolactone to 6-phosphogluconate. The sequence is that of 6-phosphogluconolactonase from Yersinia pseudotuberculosis serotype IB (strain PB1/+).